We begin with the raw amino-acid sequence, 693 residues long: Elongation factor G (693 aa).

The region spanning 7-282 (EKIRNIGITA…SVIDYLPAPT (276 aa)) is the tr-type G domain. GTP is bound by residues 16 to 23 (AHIDAGKT), 80 to 84 (DTPGH), and 134 to 137 (NKLD).

This sequence belongs to the TRAFAC class translation factor GTPase superfamily. Classic translation factor GTPase family. EF-G/EF-2 subfamily.

It localises to the cytoplasm. Functionally, catalyzes the GTP-dependent ribosomal translocation step during translation elongation. During this step, the ribosome changes from the pre-translocational (PRE) to the post-translocational (POST) state as the newly formed A-site-bound peptidyl-tRNA and P-site-bound deacylated tRNA move to the P and E sites, respectively. Catalyzes the coordinated movement of the two tRNA molecules, the mRNA and conformational changes in the ribosome. This chain is Elongation factor G, found in Granulibacter bethesdensis (strain ATCC BAA-1260 / CGDNIH1).